Reading from the N-terminus, the 912-residue chain is Ubiquitin carboxyl-terminal hydrolase 3 (912 aa).

The segment covering 1-11 (MNMQDANKEES) has biased composition (basic and acidic residues). Disordered stretches follow at residues 1–30 (MNMQDANKEESYSMYPKTSSPPPPTPTNMQ), 68–176 (IYHQ…SYSS), 241–384 (NSSV…TTAG), and 396–417 (GKSSSPLLSKQPQKKDKKYVPP). Composition is skewed to low complexity over residues 82-95 (NNINGGSTTNNNNI), 102-140 (SNGITNNNGSSGNQGANSSGSGMSYNKSHTYHHNYSNNH), and 159-176 (TNSSNGNGSSATSPSYSS). The segment covering 249-259 (AHHHTKSHSIP) has biased composition (basic residues). The span at 260–310 (KHNEEVKTETHGEEEDAHDKKPHASKDAHELKKKTEVKKEDAKQDRNEKVI) shows a compositional bias: basic and acidic residues. The segment covering 335 to 355 (SKTSSPSPSPPAAKSWSAIAS) has biased composition (low complexity). Polar residues-rich tracts occupy residues 361–384 (RQASNKTVSGSMVTKTPISGTTAG) and 396–406 (GKSSSPLLSKQ). One can recognise a USP domain in the interval 460-911 (RGIINRANIC…TAYILMYQKR (452 aa)). C469 (nucleophile) is an active-site residue. The active-site Proton acceptor is H861.

Belongs to the peptidase C19 family. Heterotetramer with BRE5; contains two molecules of BRE5 and two molecules of UBP3. Forms a complex composed of CDC48, DOA1, deubiquitinase UBP3 and probably BRE5. Within the complex interacts directly with DOA1 and CDC48 in a BRE5-independent manner.

It catalyses the reaction Thiol-dependent hydrolysis of ester, thioester, amide, peptide and isopeptide bonds formed by the C-terminal Gly of ubiquitin (a 76-residue protein attached to proteins as an intracellular targeting signal).. Has an ATP-independent isopeptidase activity, cleaving at the C-terminus of the ubiquitin moiety in natural or engineered linear fusion proteins, irrespective of their size or the presence of an N-terminal extension to ubiquitin. Plays a role in regulation of silencing by interacting with SIR4. Also, in conjunction with BRE5, cleaves ubiquitin, leading to the subsequent mono-ubiquitination of SEC23. Required for ribophagy, a process which relocalizes ribosomal particles into the vacuole for degradation in response to starvation. The protein is Ubiquitin carboxyl-terminal hydrolase 3 (UBP3) of Saccharomyces cerevisiae (strain ATCC 204508 / S288c) (Baker's yeast).